The chain runs to 431 residues: UPF0597 protein LCA_0156 (431 aa).

The protein belongs to the UPF0597 family.

This Latilactobacillus sakei subsp. sakei (strain 23K) (Lactobacillus sakei subsp. sakei) protein is UPF0597 protein LCA_0156.